The primary structure comprises 310 residues: MTARLARPYAVLSIGAALATMGLKLGAYAITGSVGLLSDALESTVNLASAIVAFWALSLAATPADSEHPFGHSKAEYFSSGLEGAFIFVAALGIGYSAVERLLSPRPLDQNALGIALAIAATALNGTVAWILWRAGKRLNSIALRADSQHLMTDVWTSVGVVVAVALIFVTGWEWLDPLIALGVGFNVLWTGTHLLRETISSLMDQSLPPAQLQAITSCFLPYEDQGVRFHLLQTRQAGSQSFISFHVLVPGHWTVQRGHDLCEAIETAIAERITGSRVTTHLEPLEDPKSWQHPDEFPPSAPLNRDKPN.

Transmembrane regions (helical) follow at residues 10 to 30 (AVLS…AYAI), 44 to 64 (TVNL…ATPA), 78 to 98 (FSSG…GYSA), 113 to 133 (LGIA…WILW), and 161 to 181 (VVVA…PLIA). Positions 285–297 (PLEDPKSWQHPDE) are enriched in basic and acidic residues. The segment at 285–310 (PLEDPKSWQHPDEFPPSAPLNRDKPN) is disordered.

The protein belongs to the cation diffusion facilitator (CDF) transporter (TC 2.A.4) family.

The protein resides in the cell membrane. This is an uncharacterized protein from Synechocystis sp. (strain ATCC 27184 / PCC 6803 / Kazusa).